The chain runs to 134 residues: ATP synthase epsilon chain (134 aa).

This sequence belongs to the ATPase epsilon chain family. As to quaternary structure, F-type ATPases have 2 components, CF(1) - the catalytic core - and CF(0) - the membrane proton channel. CF(1) has five subunits: alpha(3), beta(3), gamma(1), delta(1), epsilon(1). CF(0) has three main subunits: a, b and c.

The protein resides in the cell inner membrane. In terms of biological role, produces ATP from ADP in the presence of a proton gradient across the membrane. This chain is ATP synthase epsilon chain, found in Rhizobium meliloti (strain 1021) (Ensifer meliloti).